Reading from the N-terminus, the 446-residue chain is SWI/SNF chromatin-remodeling accessory subunit 1 (446 aa).

Positions 1–53 (MQTQARPPVPQGPRFNHPATPQQVRRPINAPLPGQTAQIQGNRGPQPPKKKKR) are disordered. The SWIB/MDM2 domain maps to 220 to 297 (YQPMKFKLHP…PQRLHQLLQQ (78 aa)).

It belongs to the SMARCD family. As to quaternary structure, component of the multiprotein chromatin-remodeling complexes SWI/SNF: SWI/SNF-A (BAF), SWI/SNF-B (PBAF) and related complexes. The canonical complex contains a catalytic subunit swsn-4, core subunits swsn-1 and swsn-5, and accessory subunits swsn-3, swsn-6, phf-10, dpff-1, swsn-9 and either ham-3/swsn-2.1 or swsn-2.2. May interact with blmp-1. In terms of tissue distribution, broadly expressed in all cell types.

Its subcellular location is the nucleus. Involved in transcriptional activation and repression of select genes by chromatin remodeling (alteration of DNA-nucleosome topology). Component of SWI/SNF chromatin remodeling complexes that carry out key enzymatic activities, changing chromatin structure by altering DNA-histone contacts within a nucleosome in an ATP-dependent manner. Required for the blmp-1-mediated transcriptional activation or repression of several hypodermal genes such as bed-3. Involved in regulating differentiation, migration and axon pathfinding of specific serotonergic neurons (HSNs). Probably regulates vulva development through the let-60/Ras pathway. May be involved in regulation of developmental processes in the embryo driven by the Wnt pathway. Involved in gonadogenesis. In Caenorhabditis elegans, this protein is SWI/SNF chromatin-remodeling accessory subunit 1.